The primary structure comprises 225 residues: ATP-dependent Clp protease proteolytic subunit (225 aa).

Serine 123 (nucleophile) is an active-site residue. The active site involves histidine 148.

This sequence belongs to the peptidase S14 family. As to quaternary structure, fourteen ClpP subunits assemble into 2 heptameric rings which stack back to back to give a disk-like structure with a central cavity, resembling the structure of eukaryotic proteasomes.

Its subcellular location is the cytoplasm. The catalysed reaction is Hydrolysis of proteins to small peptides in the presence of ATP and magnesium. alpha-casein is the usual test substrate. In the absence of ATP, only oligopeptides shorter than five residues are hydrolyzed (such as succinyl-Leu-Tyr-|-NHMec, and Leu-Tyr-Leu-|-Tyr-Trp, in which cleavage of the -Tyr-|-Leu- and -Tyr-|-Trp bonds also occurs).. Its function is as follows. Cleaves peptides in various proteins in a process that requires ATP hydrolysis. Has a chymotrypsin-like activity. Plays a major role in the degradation of misfolded proteins. The protein is ATP-dependent Clp protease proteolytic subunit of Chlorobium chlorochromatii (strain CaD3).